The primary structure comprises 381 residues: Homoserine O-succinyltransferase (381 aa).

The AB hydrolase-1 domain occupies 45–360 (NAVLVCHALN…PHGHDAFLLD (316 aa)). Ser-151 functions as the Nucleophile in the catalytic mechanism. Residue Arg-221 participates in substrate binding. Active-site residues include Asp-321 and His-354. Residue Asp-355 coordinates substrate.

The protein belongs to the AB hydrolase superfamily. MetX family. As to quaternary structure, homodimer.

The protein localises to the cytoplasm. It catalyses the reaction L-homoserine + succinyl-CoA = O-succinyl-L-homoserine + CoA. It participates in amino-acid biosynthesis; L-methionine biosynthesis via de novo pathway; O-succinyl-L-homoserine from L-homoserine: step 1/1. Its function is as follows. Transfers a succinyl group from succinyl-CoA to L-homoserine, forming succinyl-L-homoserine. This Burkholderia thailandensis (strain ATCC 700388 / DSM 13276 / CCUG 48851 / CIP 106301 / E264) protein is Homoserine O-succinyltransferase.